Reading from the N-terminus, the 763-residue chain is Xaa-Pro dipeptidyl-peptidase (763 aa).

Active-site charge relay system residues include Ser348, Asp468, and His498.

It belongs to the peptidase S15 family. In terms of assembly, homodimer.

It localises to the cytoplasm. It catalyses the reaction Hydrolyzes Xaa-Pro-|- bonds to release unblocked, N-terminal dipeptides from substrates including Ala-Pro-|-p-nitroanilide and (sequentially) Tyr-Pro-|-Phe-Pro-|-Gly-Pro-|-Ile.. In terms of biological role, removes N-terminal dipeptides sequentially from polypeptides having unsubstituted N-termini provided that the penultimate residue is proline. This Lactococcus lactis subsp. cremoris (strain SK11) protein is Xaa-Pro dipeptidyl-peptidase.